Consider the following 326-residue polypeptide: Probable cell division protein WhiA (326 aa).

The segment at residues 275-308 (SLEELGQLADPPLTKDAIAGRIRRLLAMADKRAA) is a DNA-binding region (H-T-H motif).

The protein belongs to the WhiA family.

Involved in cell division and chromosome segregation. In Thermobifida fusca (strain YX), this protein is Probable cell division protein WhiA.